Consider the following 535-residue polypeptide: MFSWLGNDDRRKKDPEVFQTVSEGLKKLYKTKLLPLEEYYRFHEFHSPALEDADFDNKPMVLLVGQYSTGKTTFIRYLLEQDFPGMRIGPEPTTDSFIAVMQGDVEGIIPGNALVVDPKKPFRKLNAFGNAFLNRFVCAQLPNAVLESISVIDTPGILSGEKQRISRGYDFAAVLEWFAERVDRIILLFDAHKLDISDEFSEVIKALKNHEDKMRVVLNKADQIETQQLMRVYGALMWSLGKIVNTPEVIRVYIGSFWSHPLLIPDNRKLFEAEEQDLFKDIQSLPRNAALRKLNDLIKRARLAKVHAYIISSLKKEMPSVFGKDTKKKELVNNLAEIYGRIEREHQISPGDFPNLKRMQDQLQAQDFSKFQPLKSKLLEVVDDMLAHDIAQLMVLVRQEETQRPVQMVKGGAFEGTLQGPFGHGYGEGAGEGIDDAEWVVARDKPMYDEIFYTLSPVDGKITGANAKKEMVRSKLPNSVLGKIWKLADIDKDGMLDDEEFALANHLIKVKLEGHELPSELPAHLLPPSKRKVAE.

Residue methionine 1 is modified to N-acetylmethionine. The 232-residue stretch at 55–286 folds into the Dynamin-type G domain; sequence FDNKPMVLLV…DLFKDIQSLP (232 aa). The G1 motif stretch occupies residues 65–72; that stretch reads GQYSTGKT. Position 65 to 72 (65 to 72) interacts with ATP; sequence GQYSTGKT. Positions 91–92 are G2 motif; it reads EP. The G3 motif stretch occupies residues 153–156; the sequence is DTPG. Positions 198-227 form a coiled coil; the sequence is DEFSEVIKALKNHEDKMRVVLNKADQIETQ. A G4 motif region spans residues 219 to 222; it reads NKAD. Lysine 220 is a binding site for ATP. A region of interest (G5 motif) is located at residue isoleucine 243. Tryptophan 258 contacts ATP. Lysine 315 participates in a covalent cross-link: Glycyl lysine isopeptide (Lys-Gly) (interchain with G-Cter in SUMO). Serine 349 and serine 456 each carry phosphoserine. The 89-residue stretch at 444-532 folds into the EH domain; it reads DKPMYDEIFY…AHLLPPSKRK (89 aa). In terms of domain architecture, EF-hand spans 476–511; that stretch reads LPNSVLGKIWKLADIDKDGMLDDEEFALANHLIKVK. Residues aspartate 489, aspartate 491, aspartate 493, methionine 495, and glutamate 500 each coordinate Ca(2+). Lysine 511 is covalently cross-linked (Glycyl lysine isopeptide (Lys-Gly) (interchain with G-Cter in SUMO)).

It belongs to the TRAFAC class dynamin-like GTPase superfamily. Dynamin/Fzo/YdjA family. EHD subfamily. In terms of assembly, homooligomer, and heterooligomer with EHD1, EHD2 and EHD4, ATP-binding is required for heterooligomerization. Interacts with PACSIN1. Interacts with PACSIN2. Interacts (via EH domain) with MICALL1. Interacts (via EH domain) with RAB11FIP2. Interacts with ANK2. Interacts with CACNA1GG and CACNA1H.

Its subcellular location is the recycling endosome membrane. It is found in the cell membrane. It localises to the cell projection. The protein localises to the cilium membrane. Functionally, ATP- and membrane-binding protein that controls membrane reorganization/tubulation upon ATP hydrolysis. In vitro causes tubulation of endocytic membranes. Binding to phosphatidic acid induces its membrane tubulation activity. Plays a role in endocytic transport. Involved in early endosome to recycling endosome compartment (ERC), retrograde early endosome to Golgi, and endosome to plasma membrane (rapid recycling) protein transport. Involved in the regulation of Golgi maintenance and morphology. Involved in the recycling of internalized D1 dopamine receptor. Plays a role in cardiac protein trafficking probably implicating ANK2. Involved in the ventricular membrane targeting of SLC8A1 and CACNA1C and probably the atrial membrane localization of CACNA1GG and CACNA1H implicated in the regulation of atrial myocyte excitability and cardiac conduction. In conjunction with EHD4 may be involved in endocytic trafficking of KDR/VEGFR2 implicated in control of glomerular function. Involved in the rapid recycling of integrin beta-3 implicated in cell adhesion maintenance. Involved in the unidirectional retrograde dendritic transport of endocytosed BACE1 and in efficient sorting of BACE1 to axons implicating a function in neuronal APP processing. Plays a role in the formation of the ciliary vesicle, an early step in cilium biogenesis; possibly sharing redundant functions with Ehd1. This is EH domain-containing protein 3 from Rattus norvegicus (Rat).